The following is a 432-amino-acid chain: Glutamate-1-semialdehyde 2,1-aminomutase (432 aa).

At Lys-267 the chain carries N6-(pyridoxal phosphate)lysine.

The protein belongs to the class-III pyridoxal-phosphate-dependent aminotransferase family. HemL subfamily. In terms of assembly, homodimer. Pyridoxal 5'-phosphate is required as a cofactor.

The protein localises to the cytoplasm. It carries out the reaction (S)-4-amino-5-oxopentanoate = 5-aminolevulinate. Its pathway is porphyrin-containing compound metabolism; protoporphyrin-IX biosynthesis; 5-aminolevulinate from L-glutamyl-tRNA(Glu): step 2/2. The chain is Glutamate-1-semialdehyde 2,1-aminomutase from Syntrophus aciditrophicus (strain SB).